The sequence spans 782 residues: Gelsolin (782 aa).

Residues 1–27 (MAPHRPAPALLCALSLALCALSLPVRA) form the signal peptide. Positions 53 to 176 (VVEHPEFLKA…YKKGGVASGF (124 aa)) are actin-severing. A Gelsolin-like 1 repeat occupies 76–158 (FDLVPVPTNL…VQGFESATFL (83 aa)). Phosphotyrosine; by SRC; in vitro is present on Tyr86. Ca(2+) is bound by residues Gly92, Asp93, Glu124, Asp136, Gly141, and Ala143. An actin-actin interfilament contact point region spans residues 123-126 (DESG). Residue 162-169 (KSGLKYKK) participates in a 1,2-diacyl-sn-glycero-3-phospho-(1D-myo-inositol-4,5-bisphosphate) binding. A Ca(2+)-binding site is contributed by Val172. 188–196 (RLFQVKGRR) provides a ligand contact to a 1,2-diacyl-sn-glycero-3-phospho-(1D-myo-inositol-4,5-bisphosphate). One copy of the Gelsolin-like 2 repeat lies at 198–270 (VRATEVPVSW…SEEGTEPEAM (73 aa)). Ca(2+)-binding residues include Gly213 and Asp214. The cysteines at positions 215 and 228 are disulfide-linked. Residue Glu236 coordinates Ca(2+). Positions 247 to 262 (IRDNERSGRARVHVSE) are enriched in basic and acidic residues. Residues 247–285 (IRDNERSGRARVHVSEEGTEPEAMLQVLGPKPALPAGTE) are disordered. Ca(2+) contacts are provided by Asp286, Glu329, Asp330, and Glu354. A Gelsolin-like 3 repeat occupies 317-389 (DENPFAQGAL…LPEGGETPLF (73 aa)). Phosphotyrosine; by SRC; in vitro is present on Tyr409. The actin-binding, Ca-sensitive stretch occupies residues 434 to 782 (AAQHGMDDDG…LDRAMAELAA (349 aa)). The stretch at 455–536 (SNKVPVDPAT…VQGKEPAHLM (82 aa)) is one Gelsolin-like 4 repeat. Tyr465 is subject to Phosphotyrosine; by SRC. Ca(2+)-binding residues include Gly471, Asp472, Glu502, Asp514, Gly519, Pro521, and Thr551. A Gelsolin-like 5 repeat occupies 576–642 (TRAVEVLPKA…AEGSEPDGFW (67 aa)). Lys584 is subject to N6-acetyllysine. Ca(2+)-binding residues include Asn591 and Asp592. Tyr603 carries the post-translational modification Phosphotyrosine; by SRC; in vitro. Glu614 contacts Ca(2+). Tyr651 bears the Phosphotyrosine; by SRC; in vitro mark. One copy of the Gelsolin-like 6 repeat lies at 681–756 (IEEVPGELMQ…VKQGFEPPSF (76 aa)). Residues Asp696, Asp697, and Glu719 each coordinate Ca(2+). The residue at position 742 (Thr742) is a Phosphothreonine.

The protein belongs to the villin/gelsolin family. Binds to actin and to fibronectin. Identified in a complex composed of ACTA1, COBL, GSN and TMSB4X. Interacts with the inactive form of EIF2AK2/PKR. Interacts with FLII. Post-translationally, phosphorylation on Tyr-86, Tyr-409, Tyr-465, Tyr-603 and Tyr-651 in vitro is induced in presence of phospholipids. In terms of tissue distribution, phagocytic cells, platelets, fibroblasts, nonmuscle cells, smooth and skeletal muscle cells.

It localises to the cytoplasm. Its subcellular location is the cytoskeleton. It is found in the secreted. In terms of biological role, calcium-regulated, actin-modulating protein that binds to the plus (or barbed) ends of actin monomers or filaments, preventing monomer exchange (end-blocking or capping). It can promote the assembly of monomers into filaments (nucleation) as well as sever filaments already formed. Plays a role in ciliogenesis. This chain is Gelsolin (GSN), found in Homo sapiens (Human).